The following is a 193-amino-acid chain: uncharacterized protein (193 aa).

A signal peptide spans 1–22; that stretch reads MAVQKNVIKGILAGTFALMLSG. A lipid anchor (N-palmitoyl cysteine) is attached at Cys-23. Cys-23 is lipidated: S-diacylglycerol cysteine.

Its subcellular location is the cell membrane. This is an uncharacterized protein from Escherichia coli (strain K12).